The primary structure comprises 445 residues: Phosphoglucosamine mutase (445 aa).

The Phosphoserine intermediate role is filled by serine 101. The Mg(2+) site is built by serine 101, aspartate 240, aspartate 242, and aspartate 244. The residue at position 101 (serine 101) is a Phosphoserine.

Belongs to the phosphohexose mutase family. Mg(2+) serves as cofactor. Activated by phosphorylation.

It carries out the reaction alpha-D-glucosamine 1-phosphate = D-glucosamine 6-phosphate. Catalyzes the conversion of glucosamine-6-phosphate to glucosamine-1-phosphate. The polypeptide is Phosphoglucosamine mutase (Pseudomonas aeruginosa (strain UCBPP-PA14)).